Consider the following 197-residue polypeptide: MIPIVIEESGRGERAFDIYSRLLRERIIFLGEAVTSDSANRIVAQMLFLEAEDPEKDIYLYINSPGGSVYDGLGIFDTMQHIKPDVQTVCVGLAASMGAFLLCAGTKGKRSSLQHSRIMIHQPLGGASGQASDIRIQADEILYLKDRLNTELSDRTGQPLDRIQEDTDRDFFMSPGEAVSYGLIDSVIDKRPVQAVA.

Catalysis depends on S96, which acts as the Nucleophile. Residue H121 is part of the active site.

This sequence belongs to the peptidase S14 family. As to quaternary structure, fourteen ClpP subunits assemble into 2 heptameric rings which stack back to back to give a disk-like structure with a central cavity, resembling the structure of eukaryotic proteasomes.

It localises to the cytoplasm. It carries out the reaction Hydrolysis of proteins to small peptides in the presence of ATP and magnesium. alpha-casein is the usual test substrate. In the absence of ATP, only oligopeptides shorter than five residues are hydrolyzed (such as succinyl-Leu-Tyr-|-NHMec, and Leu-Tyr-Leu-|-Tyr-Trp, in which cleavage of the -Tyr-|-Leu- and -Tyr-|-Trp bonds also occurs).. Its function is as follows. Cleaves peptides in various proteins in a process that requires ATP hydrolysis. Has a chymotrypsin-like activity. Plays a major role in the degradation of misfolded proteins. This Synechococcus sp. (strain CC9902) protein is ATP-dependent Clp protease proteolytic subunit 1.